An 872-amino-acid polypeptide reads, in one-letter code: Protein SCD5 (872 aa).

Disordered regions lie at residues 1–98 (MSFD…SGGD) and 209–239 (PKPR…TGDQ). A compositionally biased stretch (polar residues) spans 48 to 85 (FWDQGSRSHSDTTLSYRNNHSNTAADNATNVSSPQKDN). The KKRVK motif; Required for interaction with GLC7, endocytosis and actin cytoskeleton organization signature appears at 272-276 (KKVRF). Disordered regions lie at residues 280–321 (ITFQ…LDFT) and 338–358 (SGLV…KKVL). 2 stretches are compositionally biased toward polar residues: residues 284-296 (DPPN…SNNS) and 339-348 (GLVSSLPSEQ). A run of 12 repeats spans residues 405-424 (QLPL…HLVR), 439-458 (QTGL…YLMR), 479-498 (SGGL…YLMK), 534-545 (SPNITLPQSNQQ), 564-575 (SPQHTYSNNVRI), 593-604 (PPQNTLPQHQQS), 608-619 (SPQNTIPQHQRS), 623-634 (SPQNTFTQNQPI), 636-647 (SPQHTYSNNQAT), 650-661 (SPQNTYTNNQQQ), 683-694 (PPQHMYSNVQKQ), and 717-728 (SPQNAANSYFQS). Positions 405–448 (QLPLEPLKPTATGSANHLVREEYNQGLHPSNGAIQTGLQPLKPT) are 3 X 20 AA approximate repeats. A phosphothreonine; by PRK1 mark is found at T416 and T450. The segment at 460-489 (HMEQPQSIKPSSTPETVTNSGGLQPLKPTA) is disordered. Residues 462–481 (EQPQSIKPSSTPETVTNSGG) are compositionally biased toward polar residues. A Phosphothreonine; by PRK1 modification is found at T490. 2 disordered regions span residues 516 to 571 (QFTN…TYSN) and 591 to 620 (AFPP…QRSQ). Residues 534-728 (SPNITLPQSN…QNAANSYFQS (195 aa)) are 9 X 12 AA approximate repeats. At S564 the chain carries Phosphoserine. A compositionally biased stretch (polar residues) spans 594 to 620 (PQNTLPQHQQSHLLSPQNTIPQHQRSQ). Residues 649-681 (ISPQNTYTNNQQQPQHLPPPPPPRAQQQQQGAI) are disordered. Residues 651–663 (PQNTYTNNQQQPQ) are compositionally biased toward low complexity. A compositionally biased stretch (polar residues) spans 697 to 727 (LVPTQPSYTNSPSIQSPNFLSPQNAANSYFQ). 2 disordered regions span residues 697-758 (LVPT…ISSF) and 806-838 (NSDI…QFPF). The segment covering 728–745 (SLLSSSPSPNPTPSNAST) has biased composition (low complexity). Polar residues-rich tracts occupy residues 746–758 (VNGN…ISSF) and 806–815 (NSDIHSQPNK). The span at 823–835 (QQVHQQQQQQQQQ) shows a compositional bias: low complexity.

In terms of assembly, interacts (via KKVRF motif) with phosphatase GLC7. Post-translationally, phosphorylation by PRK1 and/or AKL1 on Thr-416, Thr-450 and Thr-490 of repeats 1-1, 1-2 and/or 1-3 negatively regulates SCD5 function in endocytosis and actin cytoskeleton organization.

The protein resides in the membrane. Functionally, regulates both fluid phase and receptor-mediated endocytosis. Involved in vesicular transport at a late stage of the secretory pathway. Regulates actin cytoskeleton organization. The chain is Protein SCD5 (SCD5) from Saccharomyces cerevisiae (strain ATCC 204508 / S288c) (Baker's yeast).